The primary structure comprises 568 residues: MSHSVEDIKSESRRLRGSLQQSLADAVTGALREDDQTLIKYHGSYQQDDRDIRDERRRQKLEPAYQFMIRTRTPGGVITPTQWLALDGIATRYANHSLRVTTRQAFQFHGVIKRELKATMQAINATLIDTLAACGDVNRNVQVAANPLLSQAHATLYADAARVSEHLLPNTRAYYEIWLDEERVSGSGSEEEPIYGERYLPRKFKIGFAAPPLNDVDVFANDLGFIAILRDGQLLGYNVSIGGGMGASHGDAETWPRVANVIGFVTRDQLLDIATAVVTTQRDFGNRAVRKRARFKYTIDDHGLDTIVAEIARRAGFALQPAQPFAFDHNGDRYGWVEGEDGRWHLTLSLPAGRIADTDTAAHLSGLRAIAQLNVGEFRMTPNQNLVIAGVPASERARVDALVAQYALDAGNRAATALARGAMACVALPTCGLAMAEAERYLPDFSAALQPLLQQHGLADTPIVLRVSGCPNGCSRPYLAEMALVGKAPGRYNLMLGGDRRGQRLNTLYRENITEPEILAALQPLLARYASEGDHANDEGFGDFLHRAGVIALPPYPTHRRLDLELLA.

C425, C431, C470, and C474 together coordinate [4Fe-4S] cluster. Residue C474 coordinates siroheme.

Belongs to the nitrite and sulfite reductase 4Fe-4S domain family. As to quaternary structure, alpha(8)-beta(8). The alpha component is a flavoprotein, the beta component is a hemoprotein. It depends on siroheme as a cofactor. The cofactor is [4Fe-4S] cluster.

The enzyme catalyses hydrogen sulfide + 3 NADP(+) + 3 H2O = sulfite + 3 NADPH + 4 H(+). It functions in the pathway sulfur metabolism; hydrogen sulfide biosynthesis; hydrogen sulfide from sulfite (NADPH route): step 1/1. In terms of biological role, component of the sulfite reductase complex that catalyzes the 6-electron reduction of sulfite to sulfide. This is one of several activities required for the biosynthesis of L-cysteine from sulfate. The polypeptide is Sulfite reductase [NADPH] hemoprotein beta-component (Xanthomonas euvesicatoria pv. vesicatoria (strain 85-10) (Xanthomonas campestris pv. vesicatoria)).